The primary structure comprises 973 residues: Serine/threonine-protein kinase atg1 (973 aa).

Positions 23–328 (YTRLDEIGRG…FPDFFQNGVI (306 aa)) constitute a Protein kinase domain. Residues 29 to 37 (IGRGSFATV) and Lys-52 contribute to the ATP site. The active-site Proton acceptor is the Asp-166. 4 disordered regions span residues 338-446 (DDLP…PGRQ), 460-482 (RQKGRNTFSEGSPQIDRQADKLR), 523-587 (GNIS…QSPT), and 949-973 (PTPSANVPSKMASSNPVSVGATPPK). Polar residues predominate over residues 387–407 (GLTQRPPSQNQRFGTPQTTTP). Over residues 523 to 537 (GNISRGAQTGALSRR) the composition is skewed to polar residues. Residues 566–582 (SRADSMHNRQGSYERRY) show a composition bias toward basic and acidic residues. Residues 951–965 (PSANVPSKMASSNPV) show a composition bias toward polar residues.

It belongs to the protein kinase superfamily. Ser/Thr protein kinase family. APG1/unc-51/ULK1 subfamily. As to quaternary structure, homodimer. Forms a ternary complex with ATG13 and ATG17.

The protein localises to the cytoplasm. The protein resides in the preautophagosomal structure membrane. It catalyses the reaction L-seryl-[protein] + ATP = O-phospho-L-seryl-[protein] + ADP + H(+). It carries out the reaction L-threonyl-[protein] + ATP = O-phospho-L-threonyl-[protein] + ADP + H(+). Its function is as follows. Serine/threonine protein kinase involved in the cytoplasm to vacuole transport (Cvt) and found to be essential in autophagy, where it is required for the formation of autophagosomes. Involved in the clearance of protein aggregates which cannot be efficiently cleared by the proteasome. Required for selective autophagic degradation of the nucleus (nucleophagy) as well as for mitophagy which contributes to regulate mitochondrial quantity and quality by eliminating the mitochondria to a basal level to fulfill cellular energy requirements and preventing excess ROS production. Also involved in endoplasmic reticulum-specific autophagic process, in selective removal of ER-associated degradation (ERAD) substrates. Plays a key role in ATG9 and ATG23 cycling through the pre-autophagosomal structure and is necessary to promote ATG18 binding to ATG9 through phosphorylation of ATG9. Catalyzes phosphorylation of ATG4, decreasing the interaction between ATG4 and ATG8 and impairing deconjugation of PE-conjugated forms of ATG8. The sequence is that of Serine/threonine-protein kinase atg1 from Aspergillus fumigatus (strain ATCC MYA-4609 / CBS 101355 / FGSC A1100 / Af293) (Neosartorya fumigata).